We begin with the raw amino-acid sequence, 295 residues long: Probable cell division protein WhiA (295 aa).

Residues Ser262–Asp293 constitute a DNA-binding region (H-T-H motif).

This sequence belongs to the WhiA family.

Its function is as follows. Involved in cell division and chromosome segregation. The sequence is that of Probable cell division protein WhiA from Thermotoga maritima (strain ATCC 43589 / DSM 3109 / JCM 10099 / NBRC 100826 / MSB8).